A 701-amino-acid polypeptide reads, in one-letter code: L-glutamate oxidase precursor (701 aa).

An N-terminal signal peptide occupies residues 1–14 (MTTDTARRHTGAER). 8 residues coordinate FAD: Ala-69, Glu-88, Ala-89, Arg-97, Met-123, Arg-124, Met-354, and Ser-409. A propeptide spanning residues 481–520 (LALPQSVRNLPTGLLGAHPSVDESRIGEEQVEYYRNSELR) is cleaved from the precursor. Positions 645, 653, and 654 each coordinate FAD. Residues 684 to 701 (RRGAAAATEPMREEALTS) constitute a propeptide that is removed on maturation.

The protein belongs to the flavin monoamine oxidase family. LGOX subfamily. In terms of assembly, the LGOX precursor forms homodimers. The mature enzyme is a heterohexamer composed of 2 alpha chains, 2 beta chains and 2 gamma chains (alpha2beta2gamma2). It depends on FAD as a cofactor. In terms of processing, the precursor form is proteolytically cleaved by an endopeptidase into alpha, beta and gamma chains, which form the stable mature enzyme. Activation by proteolysis occurs after secretion.

It localises to the secreted. It catalyses the reaction L-glutamate + O2 + H2O = H2O2 + 2-oxoglutarate + NH4(+). With respect to regulation, produced as a single polypeptide precursor and is activated by proteolytic cleavage. The LGOX precursor is an active enzyme, but it exhibits lower catalytic efficiency and lower thermostability compared with the mature hexameric LGOX. The mature form is strongly inhibited by p-chloromercuribenzoate, but not by CuCl(2), EDTA and diethyldithiocarbamate. Functionally, catalyzes the oxidative deamination of L-glutamate to 2-ketoglutarate along with the production of ammonia and hydrogen peroxide. Shows strict substrate specificity for L-glutamate, and exhibits only very weak activity with L-aspartate. This is L-glutamate oxidase precursor from Streptomyces sp.